The chain runs to 1534 residues: DNA-directed RNA polymerase subunit beta'' (1534 aa).

Cys220, Cys296, Cys303, and Cys306 together coordinate Zn(2+). Basic and acidic residues-rich tracts occupy residues 644-668 and 678-688; these read RTQE…RTRE and PENKYRTREGE. Disordered regions lie at residues 644–698 and 719–800; these read RTQE…EDEY and YRTL…KKEG. 2 stretches are compositionally biased toward acidic residues: residues 744 to 762 and 770 to 789; these read GEYE…SSED and TLEE…EYGS.

Belongs to the RNA polymerase beta' chain family. RpoC2 subfamily. In plastids the minimal PEP RNA polymerase catalytic core is composed of four subunits: alpha, beta, beta', and beta''. When a (nuclear-encoded) sigma factor is associated with the core the holoenzyme is formed, which can initiate transcription. Zn(2+) is required as a cofactor.

It is found in the plastid. The protein resides in the chloroplast. It carries out the reaction RNA(n) + a ribonucleoside 5'-triphosphate = RNA(n+1) + diphosphate. Its function is as follows. DNA-dependent RNA polymerase catalyzes the transcription of DNA into RNA using the four ribonucleoside triphosphates as substrates. The sequence is that of DNA-directed RNA polymerase subunit beta'' from Saccharum hybrid (Sugarcane).